The chain runs to 572 residues: Glypican-5 (572 aa).

The first 24 residues, 1–24 (MDAQTWPVGFRCLLLLALVGSARS), serve as a signal peptide directing secretion. Residues Asn120 and Asn237 are each glycosylated (N-linked (GlcNAc...) asparagine). Residues 355–375 (SPRCSFDQSKEKHGMKTTTRN) are disordered. O-linked (Xyl...) (glycosaminoglycan) serine glycosylation is found at Ser441, Ser486, Ser495, Ser507, and Ser509. N-linked (GlcNAc...) asparagine glycosylation is present at Asn527.

Belongs to the glypican family. In adult, primarily expressed in the brain. Also detected in fetal brain, lung and liver.

The protein resides in the cell membrane. It localises to the secreted. Its subcellular location is the extracellular space. Cell surface proteoglycan that bears heparan sulfate. The protein is Glypican-5 (GPC5) of Homo sapiens (Human).